Consider the following 238-residue polypeptide: MHKLFYLLSLLMAPFVANANFMIYPISKDLKNGNSELVRVYSKSKEIQYIKIYTKKIINPGTTEEYKVDIPNWDGGLVVTPQKVILPAGASKSIRLTQFKIPKKEEVYRVYFEAVKPDSKENVIDNKKLTTELSVNIIYAALIRSLPSEQNISLNISRNAKKNIIIYNNGNVRAGVKDIYFCKSSNIDDNCVKKAYNKNIYPEKSFDTLVNNNFSYVFIKLNHEGIEKEQGLIQLKVP.

The signal sequence occupies residues 1 to 19 (MHKLFYLLSLLMAPFVANA).

The protein localises to the fimbrium. In terms of biological role, might function as a shuttle protein in the transport of fimbria through the periplasmic space or might function as an adhesin. The polypeptide is CFA/I fimbrial subunit A (cfaA) (Escherichia coli).